We begin with the raw amino-acid sequence, 238 residues long: Dolichyldiphosphatase 1 (238 aa).

4 helical membrane passes run 33-53 (LAYLSLGPVFVIVGFVTLIIF), 100-120 (PSSHSQFMWFFSVYSFLFLYL), 130-150 (FLDLLWRHVLSLGLLAAAFLV), and 162-182 (WSQVLYGGIAGGLMAVAWFIF).

Belongs to the dolichyldiphosphatase family.

It is found in the endoplasmic reticulum membrane. The catalysed reaction is a di-trans,poly-cis-dolichyl diphosphate + H2O = a di-trans,poly-cis-dolichyl phosphate + phosphate + H(+). The protein operates within protein modification; protein glycosylation. In terms of biological role, required for efficient N-glycosylation. Necessary for maintaining optimal levels of dolichol-linked oligosaccharides. Hydrolyzes dolichyl pyrophosphate at a very high rate and dolichyl monophosphate at a much lower rate. Does not act on phosphatidate. In Plecturocebus moloch (Dusky titi monkey), this protein is Dolichyldiphosphatase 1 (DOLPP1).